The primary structure comprises 628 residues: tRNA uridine 5-carboxymethylaminomethyl modification enzyme MnmG (628 aa).

14 to 19 (GAGHAG) serves as a coordination point for FAD. An NAD(+)-binding site is contributed by 274 to 288 (GPRYCPSIEDKIVRF).

This sequence belongs to the MnmG family. As to quaternary structure, homodimer. Heterotetramer of two MnmE and two MnmG subunits. The cofactor is FAD.

It localises to the cytoplasm. In terms of biological role, NAD-binding protein involved in the addition of a carboxymethylaminomethyl (cmnm) group at the wobble position (U34) of certain tRNAs, forming tRNA-cmnm(5)s(2)U34. In Clostridium kluyveri (strain ATCC 8527 / DSM 555 / NBRC 12016 / NCIMB 10680 / K1), this protein is tRNA uridine 5-carboxymethylaminomethyl modification enzyme MnmG.